Reading from the N-terminus, the 258-residue chain is Coiled-coil domain-containing protein 107 (258 aa).

The N-terminal stretch at methionine 1–glycine 24 is a signal peptide. Over residues aspartate 25 to proline 35 the composition is skewed to basic and acidic residues. Residues aspartate 25 to arginine 63 form a disordered region. A helical transmembrane segment spans residues alanine 66 to leucine 86. A coiled-coil region spans residues leucine 106–aspartate 134. The tract at residues glutamate 203 to proline 222 is disordered.

It localises to the membrane. This Bos taurus (Bovine) protein is Coiled-coil domain-containing protein 107 (CCDC107).